We begin with the raw amino-acid sequence, 307 residues long: Elongation factor Ts (307 aa).

The interval 80-83 is involved in Mg(2+) ion dislocation from EF-Tu; sequence TDFV.

The protein belongs to the EF-Ts family.

It is found in the cytoplasm. Associates with the EF-Tu.GDP complex and induces the exchange of GDP to GTP. It remains bound to the aminoacyl-tRNA.EF-Tu.GTP complex up to the GTP hydrolysis stage on the ribosome. In Rhodopseudomonas palustris (strain BisA53), this protein is Elongation factor Ts.